Here is a 266-residue protein sequence, read N- to C-terminus: Ribosomal RNA small subunit methyltransferase A (266 aa).

Asn-11, Leu-13, Gly-37, Glu-57, Asp-85, and Asn-104 together coordinate S-adenosyl-L-methionine.

It belongs to the class I-like SAM-binding methyltransferase superfamily. rRNA adenine N(6)-methyltransferase family. RsmA subfamily.

The protein localises to the cytoplasm. The enzyme catalyses adenosine(1518)/adenosine(1519) in 16S rRNA + 4 S-adenosyl-L-methionine = N(6)-dimethyladenosine(1518)/N(6)-dimethyladenosine(1519) in 16S rRNA + 4 S-adenosyl-L-homocysteine + 4 H(+). Specifically dimethylates two adjacent adenosines (A1518 and A1519) in the loop of a conserved hairpin near the 3'-end of 16S rRNA in the 30S particle. May play a critical role in biogenesis of 30S subunits. This chain is Ribosomal RNA small subunit methyltransferase A, found in Campylobacter jejuni subsp. jejuni serotype O:2 (strain ATCC 700819 / NCTC 11168).